The chain runs to 87 residues: Small ribosomal subunit protein uS15 (87 aa).

This sequence belongs to the universal ribosomal protein uS15 family. Part of the 30S ribosomal subunit. Forms a bridge to the 50S subunit in the 70S ribosome, contacting the 23S rRNA.

Its function is as follows. One of the primary rRNA binding proteins, it binds directly to 16S rRNA where it helps nucleate assembly of the platform of the 30S subunit by binding and bridging several RNA helices of the 16S rRNA. Forms an intersubunit bridge (bridge B4) with the 23S rRNA of the 50S subunit in the ribosome. In Ruminiclostridium cellulolyticum (strain ATCC 35319 / DSM 5812 / JCM 6584 / H10) (Clostridium cellulolyticum), this protein is Small ribosomal subunit protein uS15.